Reading from the N-terminus, the 1072-residue chain is Carbamoyl phosphate synthase large chain (1072 aa).

Residues 1-401 are carboxyphosphate synthetic domain; the sequence is MPKYKDINKV…SLLKAVRSLE (401 aa). The ATP site is built by Arg-129, Arg-169, Gly-175, Gly-176, Lys-208, Leu-210, Glu-215, Gly-241, Val-242, His-243, Gln-284, and Glu-298. The 195-residue stretch at 133–327 folds into the ATP-grasp 1 domain; sequence KRKMQEIGEP…IAKVAAKIAI (195 aa). Positions 284, 298, and 300 each coordinate Mg(2+). The Mn(2+) site is built by Gln-284, Glu-298, and Asn-300. The segment at 402–544 is oligomerization domain; the sequence is IKAYGLRLNN…YIYSTYGEED (143 aa). The carbamoyl phosphate synthetic domain stretch occupies residues 545–929; sequence EVEIHEIPKV…ALYKALEGAG (385 aa). The ATP-grasp 2 domain maps to 671 to 861; the sequence is SKLLKELNIN…MVKLAVEVAL (191 aa). Residues Arg-707, Lys-746, Ile-748, Glu-752, Gly-777, Val-778, His-779, Ser-780, Gln-820, and Glu-832 each contribute to the ATP site. The Mg(2+) site is built by Gln-820, Glu-832, and Asn-834. 3 residues coordinate Mn(2+): Gln-820, Glu-832, and Asn-834. The 143-residue stretch at 930-1072 folds into the MGS-like domain; that stretch reads LKIPKKGKIL…QKDNVKNLVL (143 aa). The tract at residues 930–1072 is allosteric domain; that stretch reads LKIPKKGKIL…QKDNVKNLVL (143 aa).

This sequence belongs to the CarB family. As to quaternary structure, composed of two chains; the small (or glutamine) chain promotes the hydrolysis of glutamine to ammonia, which is used by the large (or ammonia) chain to synthesize carbamoyl phosphate. Tetramer of heterodimers (alpha,beta)4. Requires Mg(2+) as cofactor. Mn(2+) serves as cofactor.

It catalyses the reaction hydrogencarbonate + L-glutamine + 2 ATP + H2O = carbamoyl phosphate + L-glutamate + 2 ADP + phosphate + 2 H(+). The enzyme catalyses hydrogencarbonate + NH4(+) + 2 ATP = carbamoyl phosphate + 2 ADP + phosphate + 2 H(+). It functions in the pathway amino-acid biosynthesis; L-arginine biosynthesis; carbamoyl phosphate from bicarbonate: step 1/1. It participates in pyrimidine metabolism; UMP biosynthesis via de novo pathway; (S)-dihydroorotate from bicarbonate: step 1/3. Its function is as follows. Large subunit of the glutamine-dependent carbamoyl phosphate synthetase (CPSase). CPSase catalyzes the formation of carbamoyl phosphate from the ammonia moiety of glutamine, carbonate, and phosphate donated by ATP, constituting the first step of 2 biosynthetic pathways, one leading to arginine and/or urea and the other to pyrimidine nucleotides. The large subunit (synthetase) binds the substrates ammonia (free or transferred from glutamine from the small subunit), hydrogencarbonate and ATP and carries out an ATP-coupled ligase reaction, activating hydrogencarbonate by forming carboxy phosphate which reacts with ammonia to form carbamoyl phosphate. The sequence is that of Carbamoyl phosphate synthase large chain from Thermoanaerobacter sp. (strain X514).